The following is a 347-amino-acid chain: Membrane progestin receptor gamma-B (347 aa).

Topologically, residues 1 to 52 (MLSLIKLQRVFNVHQVPKAFHEDGIISGYRHPRSSATECVWSLFQLTNETLN) are cytoplasmic. A helical transmembrane segment spans residues 53–73 (VWTHFLPTWYFLWKLMTVLLM). Topologically, residues 74 to 81 (EDVWNEAY) are extracellular. The helical transmembrane segment at 82-102 (TWPLLVFLFSCCVYPLASSCA) threads the bilayer. Topologically, residues 103-114 (HTFSSMSTRARH) are cytoplasmic. Residues 115–135 (ICYFFDYGALSFYSLGSAISY) traverse the membrane as a helical segment. The Extracellular segment spans residues 136–138 (SAY). Residues 139-159 (VFPDAWLSSSFHAYYISVAVF) traverse the membrane as a helical segment. Topologically, residues 160–201 (NTVLSTSLACYSRLGLPLLHYSHDIVERFSERQCPRMSKVLR) are cytoplasmic. Residues 202 to 222 (ILAFAYPYLFDNIPLFYRLFV) traverse the membrane as a helical segment. Residues 223 to 235 (CVGEGCTDNEANS) are Extracellular-facing. Residues 236 to 256 (VHVQHTLLAFLTSFLFATHLP) form a helical membrane-spanning segment. Residues 257–314 (ERLAPGRFDYIGHSHQLFHVCAIIGTHFQMKAIEMDMGLRRSQLLASAPAISFNNTIG) are Cytoplasmic-facing. A helical transmembrane segment spans residues 315–335 (AALLCVSVSLGIICVYSLPLL). Over 336–347 (YSSNPKNTANKE) the chain is Extracellular.

Belongs to the ADIPOR family.

The protein resides in the membrane. Steroid membrane receptor. Binds progesterone. May be involved in oocyte maturation. This is Membrane progestin receptor gamma-B from Danio rerio (Zebrafish).